Here is a 595-residue protein sequence, read N- to C-terminus: Threonine dehydratase 2 biosynthetic, chloroplastic (595 aa).

The N-terminal 51 residues, 1 to 51, are a transit peptide targeting the chloroplast; the sequence is MEFLCLAPTRSFSTNPKLTKSIPSDHTSTTSRIFTYQNMRGSTMRPLALPL. K143 carries the post-translational modification N6-(pyridoxal phosphate)lysine. ACT-like domains lie at 420–492 and 514–585; these read ALLA…NLSH and IFGE…LDNY.

It belongs to the serine/threonine dehydratase family. Homotetramer. It depends on pyridoxal 5'-phosphate as a cofactor. Post-translationally, proteolytically cleaved by a chymotrypsin-like digestive protease in the midgut of the lepidopteran insects to remove the C-terminal regulatory domain, which allows efficient metabolizing of threonine in the presence of high isoleucine levels in the gut. Expressed in floral buds, 8-9 mm long flowers 1 to 2 days before anthesis, open flowers and floral organs including sepals, petals, stamens and carpels of 8-9 mm flowers (at protein level). Expressed in very early floral meristems of the anantha. Over 500-fold expression in mature flowers compared to leaves. Expressed in sepals, petals, stamens and carpels of the mature flower. In sepals, mostly expressed in the abaxial mesophyll cells and in petals in parenchymal cells. Not expressed in epidermal or vascular tissues of sepals and petals. In stamens, expressed in parenchymal cells of the connective and lobes, but not expressed in differentiated tissues such as tapetum (TP), stomium (SM), or pollen grains (PG). Not expressed in roots or seeds. High level of expression in immature flower buds, unopened flowers and opened flowers. Not expressed in unstressed leaves, root, stem or petiole.

The protein resides in the plastid. It is found in the chloroplast. It carries out the reaction L-threonine = 2-oxobutanoate + NH4(+). The catalysed reaction is L-serine = pyruvate + NH4(+). It participates in amino-acid biosynthesis; L-isoleucine biosynthesis; 2-oxobutanoate from L-threonine: step 1/1. With respect to regulation, threonine dehydratase 2 biosynthetic, chloroplastic: Strongly inhibited by 1 mM isoleucine. Processed threonine dehydratase 2: Not inhibited by isoleucine. In terms of biological role, not required for normal growth and development of the plant. Functionally, involved in defense against lepidopteran, but not coleopteran herbivore insects. Acts in the insect gut to degrade threonine, which is an essential and limiting nutrient for the growth of lepidopteran larvae. Active against both L-threonine and L-serine. The protein is Threonine dehydratase 2 biosynthetic, chloroplastic of Solanum lycopersicum (Tomato).